The following is an 858-amino-acid chain: Elongation factor 2 (858 aa).

The region spanning 17–362 is the tr-type G domain; sequence ANIRNMSVIA…MITIHLPSPV (346 aa). 26–33 serves as a coordination point for GTP; sequence AHVDHGKS. Phosphothreonine is present on residues threonine 57 and threonine 59. Residues 158–161 and 216–218 contribute to the GTP site; these read NKMD and SGL. At histidine 715 the chain carries Diphthamide.

It belongs to the TRAFAC class translation factor GTPase superfamily. Classic translation factor GTPase family. EF-G/EF-2 subfamily. In terms of assembly, binds to 80S ribosomes. Actively translating ribosomes show mutually exclusive binding of eIF5a (EIF5A or EIF5A2) and EEF2/eEF2. Interacts with SERBP1; interaction sequesters EEF2/eEF2 at the A-site of the ribosome, thereby blocking the interaction sites of the mRNA-tRNA complex, promoting ribosome stabilization and hibernation. Interacts with HABP4; interaction takes place at the A-site of hibernating ribosomes and promotes ribosome stabilization. In terms of processing, phosphorylation by EF-2 kinase completely inactivates EF-2. Diphthamide is 2-[3-carboxyamido-3-(trimethyl-ammonio)propyl]histidine.

The protein localises to the cytoplasm. Its subcellular location is the nucleus. The catalysed reaction is GTP + H2O = GDP + phosphate + H(+). Functionally, catalyzes the GTP-dependent ribosomal translocation step during translation elongation. During this step, the ribosome changes from the pre-translocational (PRE) to the post-translocational (POST) state as the newly formed A-site-bound peptidyl-tRNA and P-site-bound deacylated tRNA move to the P and E sites, respectively. Catalyzes the coordinated movement of the two tRNA molecules, the mRNA and conformational changes in the ribosome. The sequence is that of Elongation factor 2 (EEF2) from Gallus gallus (Chicken).